Consider the following 507-residue polypeptide: Putative UDP-glucuronosyltransferase ugt-60 (507 aa).

A signal peptide spans 1–15 (MYLPIFCIFLSVVDS). Residue asparagine 312 is glycosylated (N-linked (GlcNAc...) asparagine). The helical transmembrane segment at 379–399 (YNSFLEAAQAGIPAVLMPLFA) threads the bilayer.

The protein belongs to the UDP-glycosyltransferase family.

It is found in the membrane. The enzyme catalyses glucuronate acceptor + UDP-alpha-D-glucuronate = acceptor beta-D-glucuronoside + UDP + H(+). The sequence is that of Putative UDP-glucuronosyltransferase ugt-60 (ugt-60) from Caenorhabditis elegans.